The following is a 57-amino-acid chain: Defensin-like protein 302 (57 aa).

Intrachain disulfides connect Cys-19-Cys-39, Cys-26-Cys-44, and Cys-32-Cys-46.

This sequence belongs to the DEFL family.

The sequence is that of Defensin-like protein 302 from Arabidopsis thaliana (Mouse-ear cress).